The sequence spans 99 residues: Signal recognition particle 19 kDa protein (99 aa).

Belongs to the SRP19 family. Part of the signal recognition particle protein translocation system, which is composed of SRP and FtsY. Archaeal SRP consists of a 7S RNA molecule of 300 nucleotides and two protein subunits: SRP54 and SRP19.

It is found in the cytoplasm. Its function is as follows. Involved in targeting and insertion of nascent membrane proteins into the cytoplasmic membrane. Binds directly to 7S RNA and mediates binding of the 54 kDa subunit of the SRP. This is Signal recognition particle 19 kDa protein from Pyrococcus abyssi (strain GE5 / Orsay).